A 34-amino-acid chain; its full sequence is MSDIN-like toxin proprotein 3 (34 aa).

Positions 1-10 are excised as a propeptide; the sequence is MSDINVIRAP. The segment at residues 11-18 is a cross-link (cyclopeptide (Leu-Pro)); the sequence is LLILSILP. A propeptide spanning residues 19 to 34 is cleaved from the precursor; that stretch reads CVGDDIEVLRRGEGLS.

Belongs to the MSDIN fungal toxin family. Post-translationally, processed by the macrocyclase-peptidase enzyme POPB to yield a toxic cyclic octapeptide. POPB first removes 10 residues from the N-terminus. Conformational trapping of the remaining peptide forces the enzyme to release this intermediate rather than proceed to macrocyclization. The enzyme rebinds the remaining peptide in a different conformation and catalyzes macrocyclization of the N-terminal 8 residues. In terms of tissue distribution, expressed in basidiocarps.

Its function is as follows. Probable toxin that belongs to the MSDIN-like toxin family responsible for a large number of food poisoning cases and deaths. The protein is MSDIN-like toxin proprotein 3 of Amanita exitialis (Guangzhou destroying angel).